A 148-amino-acid chain; its full sequence is Large ribosomal subunit protein bL9 (148 aa).

Belongs to the bacterial ribosomal protein bL9 family.

Binds to the 23S rRNA. This Streptomyces griseus subsp. griseus (strain JCM 4626 / CBS 651.72 / NBRC 13350 / KCC S-0626 / ISP 5235) protein is Large ribosomal subunit protein bL9.